An 83-amino-acid chain; its full sequence is Small integral membrane protein 10 (83 aa).

The helical transmembrane segment at 64-82 (FFYFYILASVILNVHLQVY) threads the bilayer.

The protein resides in the membrane. This chain is Small integral membrane protein 10 (SMIM10), found in Homo sapiens (Human).